A 194-amino-acid polypeptide reads, in one-letter code: MKKAFLVFLSVVLVTTVFLVKQQESVAQAKQLEYSGEEIFKGFVFAQGEVGKQLPEVFNKAMTDKLNTKQAKAFANQVVADIKKEDADFFDNLKKAVYSKDALKVDELLKKAGQIVEEKVEAAKEIAASKDDTSRVQAELVNTVDTANYFYYVSYVAAAGALILIILAIDITPIAISDNVDREMAIRTLVDELN.

The signal sequence occupies residues 1–29 (MKKAFLVFLSVVLVTTVFLVKQQESVAQA). Positions 104 to 131 (KVDELLKKAGQIVEEKVEAAKEIAASKD) form a coiled coil. Residues 149-171 (YFYYVSYVAAAGALILIILAIDI) form a helical membrane-spanning segment.

It localises to the membrane. This is an uncharacterized protein from Bacillus subtilis (strain 168).